We begin with the raw amino-acid sequence, 292 residues long: Inhibitory synaptic factor 1 (292 aa).

3 disordered regions span residues 1-25 (MNIR…RERI), 122-186 (SDSV…ERVR), and 198-292 (CDDE…KGKN). A coiled-coil region spans residues 23-63 (ERIRQRMKMVIGQLEDILRELKEVAKELREVVSQIDKLTSD). The span at 198 to 214 (CDDEEGDGEEEAAEEEG) shows a compositional bias: acidic residues. Residues 263 to 285 (RNSSTQTVSDKSTQTVLPYTATR) are compositionally biased toward polar residues.

This sequence belongs to the INSYN1 family. In terms of assembly, interacts with GPHN.

The protein localises to the postsynaptic density. Functionally, component of the protein machinery at the inhibitory synapses, probably acting as a scaffold. Inhibitory synapses dampen neuronal activity through postsynaptic hyperpolarization. This synaptic inhibition is fundamental for the functioning of the central nervous system, shaping and orchestrating the flow of information through neuronal networks to generate a precise neural code. This chain is Inhibitory synaptic factor 1, found in Bos taurus (Bovine).